The primary structure comprises 231 residues: 7-cyano-7-deazaguanine synthase (231 aa).

8–18 lines the ATP pocket; that stretch reads FSGGQDSTTCL. Residues Cys188, Cys197, Cys200, and Cys203 each contribute to the Zn(2+) site.

The protein belongs to the QueC family. The cofactor is Zn(2+).

The catalysed reaction is 7-carboxy-7-deazaguanine + NH4(+) + ATP = 7-cyano-7-deazaguanine + ADP + phosphate + H2O + H(+). It functions in the pathway purine metabolism; 7-cyano-7-deazaguanine biosynthesis. Catalyzes the ATP-dependent conversion of 7-carboxy-7-deazaguanine (CDG) to 7-cyano-7-deazaguanine (preQ(0)). The sequence is that of 7-cyano-7-deazaguanine synthase from Citrobacter koseri (strain ATCC BAA-895 / CDC 4225-83 / SGSC4696).